A 202-amino-acid polypeptide reads, in one-letter code: N-acetyltransferase 9-like protein (202 aa).

The N-acetyltransferase domain maps to 34 to 184 (EEIRRLTGSE…FTFELPKNRL (151 aa)).

The protein belongs to the acetyltransferase family. GNAT subfamily.

The chain is N-acetyltransferase 9-like protein from Caenorhabditis elegans.